Reading from the N-terminus, the 293-residue chain is Protein phosphatase 1 regulatory subunit 3B (293 aa).

The 109-residue stretch at 129-237 (RQRIENDHVC…NNQGKNYRII (109 aa)) folds into the CBM21 domain.

In terms of assembly, interacts with glycogen, PPP1CC catalytic subunit of PP1 and PYGL. Associates with glycogen particles. Forms complexes with debranching enzyme, glycogen phosphorylase, glycogen synthase and phosphorylase kinase which is necessary for its regulation of PP1 activity.

Its function is as follows. Acts as a glycogen-targeting subunit for phosphatase PP1. Facilitates interaction of the PP1 with enzymes of the glycogen metabolism and regulates its activity. Suppresses the rate at which PP1 dephosphorylates (inactivates) glycogen phosphorylase and enhances the rate at which it activates glycogen synthase and therefore limits glycogen breakdown. This chain is Protein phosphatase 1 regulatory subunit 3B (ppp1r3b), found in Danio rerio (Zebrafish).